Reading from the N-terminus, the 224-residue chain is Uracil-DNA glycosylase (224 aa).

The active-site Proton acceptor is the aspartate 65.

It belongs to the uracil-DNA glycosylase (UDG) superfamily. UNG family.

Its subcellular location is the cytoplasm. The catalysed reaction is Hydrolyzes single-stranded DNA or mismatched double-stranded DNA and polynucleotides, releasing free uracil.. Its function is as follows. Excises uracil residues from the DNA which can arise as a result of misincorporation of dUMP residues by DNA polymerase or due to deamination of cytosine. The sequence is that of Uracil-DNA glycosylase from Buchnera aphidicola subsp. Baizongia pistaciae (strain Bp).